The chain runs to 142 residues: Hemoglobin subunit alpha (142 aa).

N-acetylserine is present on serine 1. Residues 1-142 form the Globin domain; sequence SLTAKSKSIV…VASALSEKYR (142 aa). Histidine 59 is a binding site for O2. Histidine 88 lines the heme b pocket.

This sequence belongs to the globin family. In terms of assembly, heterotetramer of two alpha chains and two beta chains. As to expression, red blood cells.

Functionally, involved in oxygen transport from gills to the various peripheral tissues. The sequence is that of Hemoglobin subunit alpha (hba) from Electrophorus electricus (Electric eel).